The primary structure comprises 363 residues: mRNA decay activator protein ZFP36L2-A (363 aa).

Residues 131-136 (RYKTEL) carry the RNA-binding motif. C3H1-type zinc fingers lie at residues 131–159 (RYKT…HGFH) and 169–197 (KYKT…HNAE). An RNA-binding region spans residues 148–189 (YGEKCQFAHGFHELRSLTRHPKYKTELCRTFHTIGFCPYGPR). Residues 308–349 (ESPVFDAPPSPPDSLSDRDSYLSGSLSSGSLSGSDSPTLDSN) are disordered. The span at 328–347 (YLSGSLSSGSLSGSDSPTLD) shows a compositional bias: low complexity.

In terms of processing, phosphorylated. In terms of tissue distribution, widely expressed in adults.

It is found in the nucleus. Its subcellular location is the cytoplasm. In terms of biological role, zinc-finger RNA-binding protein that destabilizes several cytoplasmic AU-rich element (ARE)-containing mRNA transcripts by promoting their poly(A) tail removal or deadenylation, and hence provide a mechanism for attenuating protein synthesis. Acts as a 3'-untranslated region (UTR) ARE mRNA-binding adapter protein to communicate signaling events to the mRNA decay machinery. Functions by recruiting the CCR4-NOT deadenylase complex and probably other components of the cytoplasmic RNA decay machinery to the bound ARE-containing mRNAs, and hence promotes ARE-mediated mRNA deadenylation and decay processes. Binds to 3'-UTR ARE of numerous mRNAs. Also induces the degradation of ARE-containing mRNAs even in absence of poly(A) tail. Required for tubulogenesis during pronephros development. The chain is mRNA decay activator protein ZFP36L2-A (zfp36l2-A) from Xenopus laevis (African clawed frog).